The following is a 76-amino-acid chain: Small ribosomal subunit protein bS18 (76 aa).

This sequence belongs to the bacterial ribosomal protein bS18 family. Part of the 30S ribosomal subunit. Forms a tight heterodimer with protein bS6.

In terms of biological role, binds as a heterodimer with protein bS6 to the central domain of the 16S rRNA, where it helps stabilize the platform of the 30S subunit. This chain is Small ribosomal subunit protein bS18, found in Azotobacter vinelandii (strain DJ / ATCC BAA-1303).